The chain runs to 323 residues: Prenyl transferase (323 aa).

3 residues coordinate isopentenyl diphosphate: lysine 46, arginine 49, and histidine 81. Residues aspartate 88 and aspartate 92 each contribute to the Mg(2+) site. Arginine 97 contributes to the an all-trans-polyprenyl diphosphate binding site. Isopentenyl diphosphate is bound at residue arginine 98. Residues lysine 174, threonine 175, and glutamine 212 each contribute to the an all-trans-polyprenyl diphosphate site.

It belongs to the FPP/GGPP synthase family. Mg(2+) is required as a cofactor.

The protein resides in the plastid. The protein localises to the chloroplast. Its function is as follows. Possible role in synthesis of the nonaprenyl side chain of plastoquinone or in synthesis of other prenyl chains such as undekaprenyl pyrophosphate. This chain is Prenyl transferase (preA), found in Cyanidium caldarium (Red alga).